The primary structure comprises 331 residues: C4-dicarboxylate-binding periplasmic protein DctP (331 aa).

An N-terminal signal peptide occupies residues 1–23 (MLKHTAKALVCALSLTVAGIVQA).

This sequence belongs to the bacterial solute-binding protein 7 family. In terms of assembly, the complex comprises the extracytoplasmic solute receptor protein DctP, and the two transmembrane proteins DctQ and DctM.

The protein resides in the periplasm. Part of the tripartite ATP-independent periplasmic (TRAP) transport system DctPQM involved in C4-dicarboxylates uptake. This is C4-dicarboxylate-binding periplasmic protein DctP from Pseudomonas aeruginosa (strain ATCC 15692 / DSM 22644 / CIP 104116 / JCM 14847 / LMG 12228 / 1C / PRS 101 / PAO1).